The chain runs to 247 residues: Adenosylcobinamide-GDP ribazoletransferase (247 aa).

The next 6 membrane-spanning stretches (helical) occupy residues 31-51 (VVWFPAAGLVVGAAVALAAAL), 57-77 (PWLGALAGVVMWAWITGGLHL), 109-129 (FGVIVLVLQLAAKLVLLHWLL), 136-156 (PALVLIPAWTRWAAAGWTLLL), 189-209 (ITPIAFVALIPAVLWGVWMWL), and 218-238 (ILGAGIEWSESAALLLAGVSL).

Belongs to the CobS family. The cofactor is Mg(2+).

It is found in the cell inner membrane. It carries out the reaction alpha-ribazole + adenosylcob(III)inamide-GDP = adenosylcob(III)alamin + GMP + H(+). The enzyme catalyses alpha-ribazole 5'-phosphate + adenosylcob(III)inamide-GDP = adenosylcob(III)alamin 5'-phosphate + GMP + H(+). It functions in the pathway cofactor biosynthesis; adenosylcobalamin biosynthesis; adenosylcobalamin from cob(II)yrinate a,c-diamide: step 7/7. Joins adenosylcobinamide-GDP and alpha-ribazole to generate adenosylcobalamin (Ado-cobalamin). Also synthesizes adenosylcobalamin 5'-phosphate from adenosylcobinamide-GDP and alpha-ribazole 5'-phosphate. In Thiobacillus denitrificans (strain ATCC 25259 / T1), this protein is Adenosylcobinamide-GDP ribazoletransferase.